Consider the following 82-residue polypeptide: Small ribosomal subunit protein bS16 (82 aa).

It belongs to the bacterial ribosomal protein bS16 family.

The sequence is that of Small ribosomal subunit protein bS16 from Francisella tularensis subsp. holarctica (strain FTNF002-00 / FTA).